The primary structure comprises 74 residues: Omwaprin-b (74 aa).

The signal sequence occupies residues Met-1 to Ser-24. In terms of domain architecture, WAP spans Arg-27–Ile-71. 4 disulfides stabilise this stretch: Cys-34-Cys-59, Cys-42-Cys-63, Cys-46-Cys-58, and Cys-52-Cys-67.

It belongs to the venom waprin family. In terms of tissue distribution, expressed by the venom gland.

It is found in the secreted. Damages membranes of susceptible bacteria. Has antibacterial activity against the Gram-positive bacteria B.megaterium and S.warneri. After 45 minutes of treatment with this protein, B.megaterium have no visible pili and are smooth. Has no antibacterial activity against the Gram-positive bacteria B.thuringiensis, S.aureus, S.clavuligerus and B. anthracis, or the Gram-negative bacteria E.coli and A.tumefaciens. Has no hemolytic activity. Does not inhibit the proteinases elastase and cathepsin G. Is not toxic to mice. The polypeptide is Omwaprin-b (Oxyuranus microlepidotus (Inland taipan)).